The primary structure comprises 385 residues: Proliferation-associated protein A (385 aa).

It belongs to the peptidase M24 family.

The chain is Proliferation-associated protein A (prlA) from Dictyostelium discoideum (Social amoeba).